The chain runs to 438 residues: Xylose isomerase (438 aa).

Residues histidine 100 and aspartate 103 contribute to the active site. Residues glutamate 231, glutamate 267, histidine 270, aspartate 295, aspartate 306, aspartate 308, and aspartate 338 each coordinate Mg(2+).

It belongs to the xylose isomerase family. In terms of assembly, homotetramer. It depends on Mg(2+) as a cofactor.

It is found in the cytoplasm. It catalyses the reaction alpha-D-xylose = alpha-D-xylulofuranose. The sequence is that of Xylose isomerase (xylA) from Thermoanaerobacter pseudethanolicus (strain ATCC 33223 / 39E) (Clostridium thermohydrosulfuricum).